The chain runs to 412 residues: Hyaluronidase-3 (412 aa).

Positions 1–22 are cleaved as a signal peptide; the sequence is MITQLGLTLVVGLTLCLVHVQA. Intrachain disulfides connect C42-C332, C206-C221, C357-C368, C362-C396, and C398-C407. An N-linked (GlcNAc...) asparagine glycan is attached at N69. Catalysis depends on E129, which acts as the Proton donor. Residue N216 is glycosylated (N-linked (GlcNAc...) asparagine). Residues 353-408 enclose the EGF-like domain; it reads AATACSHQRCHGHGRCSWKDPGQMEAFLHLQPDDNLGAWKSFRCRCYLGWSGPTCL.

This sequence belongs to the glycosyl hydrolase 56 family. N-glycosylated.

It localises to the secreted. It is found in the cell membrane. Its subcellular location is the cytoplasmic vesicle. The protein resides in the secretory vesicle. The protein localises to the acrosome. It localises to the endoplasmic reticulum. It is found in the early endosome. The catalysed reaction is Random hydrolysis of (1-&gt;4)-linkages between N-acetyl-beta-D-glucosamine and D-glucuronate residues in hyaluronate.. In terms of biological role, facilitates sperm penetration into the layer of cumulus cells surrounding the egg by digesting hyaluronic acid. Involved in induction of the acrosome reaction in the sperm. Involved in follicular atresia, the breakdown of immature ovarian follicles that are not selected to ovulate. Induces ovarian granulosa cell apoptosis, possibly via apoptotic signaling pathway involving CASP8 and CASP3 activation, and poly(ADP-ribose) polymerase (PARP) cleavage. Has no hyaluronidase activity in embryonic fibroblasts in vitro. Has no hyaluronidase activity in granulosa cells in vitro. The sequence is that of Hyaluronidase-3 (Hyal3) from Rattus norvegicus (Rat).